The following is a 201-amino-acid chain: Alpha-1-acid glycoprotein 1 (201 aa).

Positions 1–18 (MALSWVLTVLSLLPLLEA) are cleaved as a signal peptide. Gln19 carries the post-translational modification Pyrrolidone carboxylic acid. Cystine bridges form between Cys23–Cys165 and Cys90–Cys183. Asn33 is a glycosylation site (N-linked (GlcNAc...) (complex) asparagine). A glycan (N-linked (GlcNAc...) asparagine) is linked at Asn56. The N-linked (GlcNAc...) (complex) asparagine glycan is linked to Asn72. Residues Asn93 and Asn103 are each glycosylated (N-linked (GlcNAc...) asparagine).

The protein belongs to the calycin superfamily. Lipocalin family. N-glycosylated. N-glycan heterogeneity at Asn-33: Hex5HexNAc4 (minor), Hex6HexNAc5 (major) and dHex1Hex6HexNAc5 (minor). Expressed by the liver and secreted in plasma.

It localises to the secreted. Its function is as follows. Functions as a transport protein in the blood stream. Binds various ligands in the interior of its beta-barrel domain. Also binds synthetic drugs and influences their distribution and availability in the body. Appears to function in modulating the activity of the immune system during the acute-phase reaction. The protein is Alpha-1-acid glycoprotein 1 (ORM1) of Homo sapiens (Human).